The primary structure comprises 289 residues: Toxin tox21A (289 aa).

Positions 1–14 (MNLYFLFFISTILA) are cleaved as a signal peptide. Positions 15-27 (AKPFNSFNKTSLI) are excised as a propeptide. The interval 270-289 (DKDITVHENAGDPKSDSRRC) is disordered.

Contains several disulfide bonds. Posterior glands which appear to be connected with the stylet through a series of ducts.

The protein localises to the secreted. In terms of biological role, has contracting-paralyzing activity in insect larvae. The protein is Toxin tox21A of Pyemotes tritici (Straw itch mite).